Here is a 141-residue protein sequence, read N- to C-terminus: 3-hydroxyacyl-[acyl-carrier-protein] dehydratase FabZ (141 aa).

Histidine 49 is an active-site residue.

It belongs to the thioester dehydratase family. FabZ subfamily.

It localises to the cytoplasm. It carries out the reaction a (3R)-hydroxyacyl-[ACP] = a (2E)-enoyl-[ACP] + H2O. Involved in unsaturated fatty acids biosynthesis. Catalyzes the dehydration of short chain beta-hydroxyacyl-ACPs and long chain saturated and unsaturated beta-hydroxyacyl-ACPs. This Enterococcus faecalis (strain ATCC 700802 / V583) protein is 3-hydroxyacyl-[acyl-carrier-protein] dehydratase FabZ (fabZ2).